The sequence spans 98 residues: Serine rich endogenous peptide 10 (98 aa).

An N-terminal signal peptide occupies residues 1–29; sequence MERKKFSSKFIHLLIVFLLLCTFLSRTES. The tract at residues 50 to 98 is disordered; it reads NSAIGTPSSTSDHAPGSNGRKLMSIYRPNGDIFTGPSGSGHGGGRTPAP. A compositionally biased stretch (polar residues) spans 52–61; sequence AIGTPSSTSD. 2 consecutive short sequence motifs (SCOOP motif) follow at residues 52-66 and 80-94; these read AIGT…APGS and DIFT…GGGR. 2 consecutive short sequence motifs (sxS motif essential for MIK2 binding) follow at residues 58–60 and 86–88; these read STS and SGS. The span at 86–98 shows a compositional bias: gly residues; the sequence is SGSGHGGGRTPAP.

It belongs to the serine rich endogenous peptide (SCOOP) phytocytokine family. In terms of assembly, interacts with MIK2 (via extracellular leucine-rich repeat domain); this interaction triggers the formation of complex between MIK2 and the BAK1/SERK3 and SERK4 coreceptors, and subsequent BAK1 activation by phosphorylation. As to expression, mostly expressed in leaves and seedlings shoots, to a lower extent, in roots, but barely in flowers.

The protein localises to the cell membrane. It localises to the secreted. Its subcellular location is the extracellular space. The protein resides in the apoplast. In terms of biological role, brassicaceae-specific phytocytokine (plant endogenous peptide released into the apoplast) perceived by MIK2 in a BAK1/SERK3 and SERK4 coreceptors-dependent manner, that modulates various physiological and antimicrobial processes including growth prevention and reactive oxygen species (ROS) response regulation. Inhibits root growth and regulates root meristems. Promotes ROS production and MAPK (e.g. MPK3, MPK4 and MPK6) activation in a MIK2-dependent manner, thus leading to the up-regulation of immune-related marker genes (e.g. WRKY30, WRKY33 and CYP81F2). The protein is Serine rich endogenous peptide 10 of Arabidopsis thaliana (Mouse-ear cress).